The chain runs to 681 residues: 2-(S-pantetheinyl)-carbapenam-3-carboxylate methyltransferase (681 aa).

One can recognise a B12-binding domain in the interval 1–144 (MTVPAARSGR…IERLADHPDY (144 aa)). Cob(II)alamin contacts are provided by asparagine 18, serine 72, tyrosine 74, valine 75, histidine 103, glycine 126, and glutamate 127. A Radical SAM core domain is found at 192-417 (RDLRFYALWE…RLYVEEPGTP (226 aa)). Residues cysteine 206 and cysteine 210 each contribute to the [4Fe-4S] cluster site. Phenylalanine 212 serves as a coordination point for 5'-deoxyadenosine. Cysteine 213 is a binding site for [4Fe-4S] cluster. Cob(II)alamin-binding residues include aspartate 214 and cysteine 249. The 5'-deoxyadenosine site is built by glutamine 312, glutamate 349, and glycine 384.

This sequence belongs to the methyltransferase superfamily. The cofactor is [4Fe-4S] cluster. Cob(II)alamin serves as cofactor.

The enzyme catalyses (2R,3R,5S)-2-(S-pantetheinyl)-carbapenam-3-carboxylate + AH2 + 2 S-adenosyl-L-methionine = (2R,3R,5S,6R)-6-(methyl)-2-(S-pantetheinyl)-carbapenam-3-carboxylate + 5'-deoxyadenosine + L-methionine + A + S-adenosyl-L-homocysteine + 2 H(+). The catalysed reaction is (2R,3R,5S,6R)-6-(methyl)-2-(S-pantetheinyl)-carbapenam-3-carboxylate + AH2 + 2 S-adenosyl-L-methionine = (2R,3R,5S,6R)-6-(ethyl)-2-(S-pantetheinyl)-carbapenam-3-carboxylate + 5'-deoxyadenosine + L-methionine + A + S-adenosyl-L-homocysteine + 2 H(+). It participates in antibiotic biosynthesis. Functionally, methyltransferase involved in the biosynthesis of the beta-lactam carbapenem antibiotic thienamycin. Catalyzes two consecutive S-adenosyl-L-methionine-dependent methylations to build out the C6-ethyl side chain in a stereocontrolled manner. In vitro can use methyl viologen and NADPH as the iron-sulfur cluster reductants. The polypeptide is 2-(S-pantetheinyl)-carbapenam-3-carboxylate methyltransferase (Streptantibioticus cattleyicolor (strain ATCC 35852 / DSM 46488 / JCM 4925 / NBRC 14057 / NRRL 8057) (Streptomyces cattleya)).